Here is a 140-residue protein sequence, read N- to C-terminus: Resuscitation-promoting factor RpfC (140 aa).

An N-terminal signal peptide occupies residues 1 to 31 (MTRIAKPLIKSAMAAGLVTASMSLSTAVAHA).

Belongs to the transglycosylase family. Rpf subfamily.

The protein resides in the secreted. In terms of biological role, factor that stimulates resuscitation of dormant cells. Has peptidoglycan (PG) hydrolytic activity. This chain is Resuscitation-promoting factor RpfC (rpfC), found in Mycobacterium tuberculosis (strain ATCC 35801 / TMC 107 / Erdman).